The sequence spans 426 residues: Glutamate-1-semialdehyde 2,1-aminomutase (426 aa).

Lys265 carries the N6-(pyridoxal phosphate)lysine modification.

This sequence belongs to the class-III pyridoxal-phosphate-dependent aminotransferase family. HemL subfamily. Homodimer. It depends on pyridoxal 5'-phosphate as a cofactor.

The protein resides in the cytoplasm. The catalysed reaction is (S)-4-amino-5-oxopentanoate = 5-aminolevulinate. The protein operates within porphyrin-containing compound metabolism; protoporphyrin-IX biosynthesis; 5-aminolevulinate from L-glutamyl-tRNA(Glu): step 2/2. The sequence is that of Glutamate-1-semialdehyde 2,1-aminomutase from Cellvibrio japonicus (strain Ueda107) (Pseudomonas fluorescens subsp. cellulosa).